Consider the following 256-residue polypeptide: Protein FixA (256 aa).

The protein belongs to the ETF beta-subunit/FixA family. Heterodimer of FixA and FixB.

The protein operates within amine and polyamine metabolism; carnitine metabolism. Required for anaerobic carnitine reduction. May bring reductant to CaiA. The chain is Protein FixA from Salmonella dublin (strain CT_02021853).